Consider the following 205-residue polypeptide: Urease accessory protein UreE (205 aa).

Over residues 171–192 the composition is skewed to basic and acidic residues; sequence HHGHSHSHDHDHDHDHDHDHQH. Residues 171–205 form a disordered region; it reads HHGHSHSHDHDHDHDHDHDHQHGPCCSHGHHHGHR.

The protein belongs to the UreE family.

Its subcellular location is the cytoplasm. Involved in urease metallocenter assembly. Binds nickel. Probably functions as a nickel donor during metallocenter assembly. The sequence is that of Urease accessory protein UreE from Burkholderia pseudomallei (strain K96243).